Consider the following 309-residue polypeptide: Taste receptor type 2 member 113 (309 aa).

The Extracellular portion of the chain corresponds to 1–10 (MVAVLQSTLP). A helical transmembrane segment spans residues 11–31 (IIFSMEFIMGTLGNGFIFLIV). The Cytoplasmic portion of the chain corresponds to 32–55 (CIDWVQRRKISLVDQIRTALAISR). The chain crosses the membrane as a helical span at residues 56 to 76 (IALIWLIFLDWWVSVHYPALH). Over 77-80 (ETGK) the chain is Extracellular. The chain crosses the membrane as a helical span at residues 81–101 (MLSTYLISWTVINHCNFWLTA). The Cytoplasmic portion of the chain corresponds to 102–127 (NLSILYFLKIANFSNIIFLYLKFRSK). A helical membrane pass occupies residues 128-148 (NVVLVTLLVSLFFLFLNTVII). The Extracellular portion of the chain corresponds to 149-185 (KIFSDVCFDSVQRNVSQIFIMYNHEQICKFLSFTNPM). Residue Asn-162 is glycosylated (N-linked (GlcNAc...) asparagine). Residues 186-206 (FTFIPFVMSTVMFSLLIFSLW) traverse the membrane as a helical segment. The Cytoplasmic portion of the chain corresponds to 207 to 229 (RHLKNMQHTAKGCRDISTTVHIR). The helical transmembrane segment at 230–250 (ALQTIIVSVVLYTIFFLSFFV) threads the bilayer. Over 251-262 (KVWSFVSPERYL) the chain is Extracellular. The helical transmembrane segment at 263–283 (IFLFVWALGNAVFSAHPFVMI) threads the bilayer. The Cytoplasmic portion of the chain corresponds to 284–309 (LVNRRLRLASLSLIFWLWYRFKNIEV).

Belongs to the G-protein coupled receptor T2R family.

The protein localises to the membrane. Functionally, putative taste receptor which may play a role in the perception of bitterness. The sequence is that of Taste receptor type 2 member 113 from Mus musculus (Mouse).